We begin with the raw amino-acid sequence, 299 residues long: pH-regulated antigen PRA1 (299 aa).

An N-terminal signal peptide occupies residues 1–15 (MNYLLFCLFFAFSVA). N-linked (GlcNAc...) asparagine glycosylation is found at Asn-48, Asn-89, Asn-135, and Asn-208. A disordered region spans residues 253–299 (FEDSDSGSDSGASSTASSSHQHTDSNPSATTDANSHCHTHADGEVHC). Over residues 259 to 272 (GSDSGASSTASSSH) the composition is skewed to low complexity. The span at 278–288 (NPSATTDANSH) shows a compositional bias: polar residues.

This sequence belongs to the ZPS1 family. In terms of assembly, component of a multiprotein complex of 250 kDa composed of at least HYR1, MP65, and PRA1. Interacts with host Integrin alpha-M/beta-2 heterodimer. Also binds human factor H (CFH), CFHR1, plasminogen (PLG), complement C3, and C4BPA. Interacts with ZRT101. In terms of processing, N- and O-glycosylated. The N- and 0-glycosidically linked carbohydrates represent 18 to 20 percent and 3 to 4 percent, respectively, of the molecular mass of PRA1. 0-linked sugar residues may be involved in the interaction with fibrinogen. Contributes highly to the carbohydrate component of the matrix. Treatment with tunicamycin impairs glycosylation.

The protein resides in the secreted. Functionally, cell surface protein involved in the host-parasite interaction during candidal infection. With MP65, represents a major component of the biofilm matrix. As a surface protein, binds the two human complement regulators CFH and CFHR1, as well as plasminogen PLG, mediates complement evasion and extra-cellular matrix interaction and/or degradation. As a released protein, enhances complement control in direct vicinity of the yeast and thus generates an additional protective layer which controls host complement attack, assisting the fungus in escaping host surveillance. Binds to host fluid-phase C3 and blocks cleavage of C3 to C3a and C3b, leading to inhibition of complement activation and protection from uptake of C.albicans by human macrophages. Also mediates human complement control and complement evasion through binding to C4BPA, another human complement inhibitor, as well as through binding to host integrin alpha-M/beta-2. Binds zinc from its environment and then reassociates with ZRT1 to acquire this essential metal. The polypeptide is pH-regulated antigen PRA1 (Candida albicans (strain SC5314 / ATCC MYA-2876) (Yeast)).